An 837-amino-acid chain; its full sequence is Mannosyl-oligosaccharide glucosidase (837 aa).

Basic residues predominate over residues 1–10 (MARGERRRRA). The Cytoplasmic portion of the chain corresponds to 1–38 (MARGERRRRAVPAEGVRTAERAARGGPGRRDGRGGGPR). The tract at residues 1 to 39 (MARGERRRRAVPAEGVRTAERAARGGPGRRDGRGGGPRS) is disordered. The Endoplasmic reticulum targeting signature appears at 3–9 (RGERRRR). Positions 17–33 (RTAERAARGGPGRRDGR) are enriched in basic and acidic residues. A helical; Signal-anchor for type II membrane protein membrane pass occupies residues 39-59 (STAGGVALAVVVLSLALGMSG). Topologically, residues 60–837 (RWVLAWYRAR…LVLLAMAEDY (778 aa)) are lumenal. The interval 76-137 (SAPPVLPADS…PGTPKLRHTC (62 aa)) is required for endoplasmic reticulum targeting. D583 functions as the Proton donor in the catalytic mechanism. N-linked (GlcNAc...) asparagine glycosylation occurs at N657. Catalysis depends on E807, which acts as the Proton acceptor.

Belongs to the glycosyl hydrolase 63 family.

Its subcellular location is the endoplasmic reticulum membrane. It carries out the reaction N(4)-(alpha-D-Glc-(1-&gt;2)-alpha-D-Glc-(1-&gt;3)-alpha-D-Glc-(1-&gt;3)-alpha-D-Man-(1-&gt;2)-alpha-D-Man-(1-&gt;2)-alpha-D-Man-(1-&gt;3)-[alpha-D-Man-(1-&gt;2)-alpha-D-Man-(1-&gt;3)-[alpha-D-Man-(1-&gt;2)-alpha-D-Man-(1-&gt;6)]-alpha-D-Man-(1-&gt;6)]-beta-D-Man-(1-&gt;4)-beta-D-GlcNAc-(1-&gt;4)-beta-D-GlcNAc)-L-asparaginyl-[protein] + H2O = N(4)-(alpha-D-Glc-(1-&gt;3)-alpha-D-Glc-(1-&gt;3)-alpha-D-Man-(1-&gt;2)-alpha-D-Man-(1-&gt;2)-alpha-D-Man-(1-&gt;3)-[alpha-D-Man-(1-&gt;2)-alpha-D-Man-(1-&gt;3)-[alpha-D-Man-(1-&gt;2)-alpha-D-Man-(1-&gt;6)]-alpha-D-Man-(1-&gt;6)]-beta-D-Man-(1-&gt;4)-beta-D-GlcNAc-(1-&gt;4)-beta-D-GlcNAc)-L-asparaginyl-[protein] + beta-D-glucose. The protein operates within glycan metabolism; N-glycan degradation. Its activity is regulated as follows. Inhibited by 1-deoxynojirimycin (40% inhibition) and N,N-dimethyl-deoxynojirimycin (85% inhibition). Its function is as follows. In the context of N-glycan degradation, cleaves the distal alpha 1,2-linked glucose residue from the Glc(3)Man(9)GlcNAc(2) oligosaccharide precursor in a highly specific manner. The sequence is that of Mannosyl-oligosaccharide glucosidase from Homo sapiens (Human).